The chain runs to 305 residues: Taste receptor type 2 member 13 (305 aa).

The Extracellular segment spans residues 1–7 (MGSNVYG). A helical membrane pass occupies residues 8 to 28 (ILTMVMIAEFVFGNMSNGFIV). The Cytoplasmic segment spans residues 29–43 (LINCIDWVRKGTLSS). Residues 44-64 (IGWILLFLAISRMVLIWEMLI) form a helical membrane-spanning segment. The Extracellular portion of the chain corresponds to 65–88 (TWIKYMKYSFSFVTGTELRGIMFT). Residues 89–109 (WVISNHFSLWLATILSIFYLL) traverse the membrane as a helical segment. Residues 110–128 (KIASFSKPVFLYLKWREKK) lie on the Cytoplasmic side of the membrane. The helical transmembrane segment at 129 to 149 (VLLIVLLGNLIFLMLNILQIN) threads the bilayer. Residues 150–182 (KHIEHWMYQYERNITWSSRVSDFAGFSNLVLLE) are Extracellular-facing. Asn-162 carries N-linked (GlcNAc...) asparagine glycosylation. Residues 183–203 (MIVFSVTPFTVALVSFILLIF) traverse the membrane as a helical segment. The Cytoplasmic segment spans residues 204–232 (SLWKHLQKMHLNSRGERDPSTKAHVNALR). Residues 233–253 (IMVSFLLLYATYFISFFLSLI) form a helical membrane-spanning segment. Residues 254-262 (PMAHKTRLG) lie on the Extracellular side of the membrane. A helical transmembrane segment spans residues 263-283 (LMFSITVGLFYPSSHSFILIL). Residues 284–305 (GHSNLRQASLWVMTYLKCGQKH) are Cytoplasmic-facing.

This sequence belongs to the G-protein coupled receptor T2R family.

Its subcellular location is the cell membrane. In terms of biological role, receptor that may play a role in the perception of bitterness and is gustducin-linked. May play a role in sensing the chemical composition of the gastrointestinal content. The activity of this receptor may stimulate alpha gustducin, mediate PLC-beta-2 activation and lead to the gating of TRPM5. This Mus musculus (Mouse) protein is Taste receptor type 2 member 13.